We begin with the raw amino-acid sequence, 502 residues long: Glutamate decarboxylase (502 aa).

K278 is modified (N6-(pyridoxal phosphate)lysine). The calmodulin-binding stretch occupies residues 471–502; sequence GLHHFHMDTVETQKDIIKHWRKIAGKKTSGVC.

This sequence belongs to the group II decarboxylase family. Pyridoxal 5'-phosphate is required as a cofactor.

It carries out the reaction L-glutamate + H(+) = 4-aminobutanoate + CO2. Catalyzes the production of GABA. The calmodulin-binding is calcium-dependent and it is proposed that this may, directly or indirectly, form a calcium regulated control of GABA biosynthesis. In Solanum lycopersicum (Tomato), this protein is Glutamate decarboxylase.